The chain runs to 107 residues: Heme-degrading monooxygenase (107 aa).

Positions 2–94 (IIVTNTAKIT…YILDNKISYY (93 aa)) constitute an ABM domain. Position 6 (Asn6) interacts with Fe cation. His76 is a heme binding site.

Belongs to the antibiotic biosynthesis monooxygenase family. Heme-degrading monooxygenase IsdG subfamily. Homodimer.

Its subcellular location is the cytoplasm. The catalysed reaction is heme b + 3 reduced [NADPH--hemoprotein reductase] + 3 O2 = biliverdin IXalpha + CO + Fe(2+) + 3 oxidized [NADPH--hemoprotein reductase] + 3 H2O + H(+). In terms of biological role, allows bacterial pathogens to use the host heme as an iron source. Catalyzes the oxidative degradation of the heme macrocyclic porphyrin ring to the biliverdin in the presence of a suitable electron donor such as ascorbate or NADPH--cytochrome P450 reductase, with subsequent release of free iron. This Bacillus cereus (strain AH187) protein is Heme-degrading monooxygenase.